We begin with the raw amino-acid sequence, 80 residues long: Protein YibX (80 aa).

In Escherichia coli (strain K12), this protein is Protein YibX.